The sequence spans 62 residues: uncharacterized protein (62 aa).

The disordered stretch occupies residues 1 to 62 (MTSTQNLKDK…PPKKSLSQLP (62 aa)). A compositionally biased stretch (basic and acidic residues) spans 7-29 (LKDKFEEEIRQQKEGKGKKEKVW). Over residues 32–43 (HSDSSYNKQTAV) the composition is skewed to polar residues.

This is an uncharacterized protein from Dictyostelium discoideum (Social amoeba).